The chain runs to 309 residues: Taste receptor type 2 member 8 (309 aa).

Residues 1-7 lie on the Extracellular side of the membrane; it reads MFSPADN. A helical transmembrane segment spans residues 8–28; sequence IFIILITGEFILGILGNGYIA. Over 29 to 50 the chain is Cytoplasmic; sequence LVNWIDWIKKKKISTTDYILTN. A helical transmembrane segment spans residues 51–71; sequence LVISRICLISVIVVNGIVTVL. Topologically, residues 72 to 82 are extracellular; the sequence is YPDVYTKSKLQ. A helical transmembrane segment spans residues 83–103; that stretch reads IAISTFWTFANYLNMWFTTCL. Residues 104-131 lie on the Cytoplasmic side of the membrane; the sequence is NVFYFLKIANSSHPLFLWLKQKIDMVVR. A helical membrane pass occupies residues 132–152; it reads WILLGCFAISLLVSLIIAIVL. At 153-184 the chain is on the extracellular side; the sequence is SRDYRFHAIAKHKRNITEMFHVSKMLYFEPLT. N-linked (GlcNAc...) asparagine glycosylation occurs at asparagine 167. A helical membrane pass occupies residues 185 to 205; it reads LFNLLAIVPFIVSLMSFFLLV. The Cytoplasmic segment spans residues 206-239; sequence RSLQRHTKQIKLYATGGRDPSTEAHVRAIKTMTS. Residues 240 to 260 form a helical membrane-spanning segment; that stretch reads FIFFFFLYYITSLLVTFSYLM. Over 261-266 the chain is Extracellular; it reads TKYKLA. Residues 267 to 287 traverse the membrane as a helical segment; the sequence is MAFGEIVAILYPSGHSFILII. Topologically, residues 288–309 are cytoplasmic; it reads LNNKLRQASVRMLTCIKITCVI.

Belongs to the G-protein coupled receptor T2R family.

The protein resides in the membrane. Receptor that may play a role in the perception of bitterness and is gustducin-linked. May play a role in sensing the chemical composition of the gastrointestinal content. The activity of this receptor may stimulate alpha gustducin, mediate PLC-beta-2 activation and lead to the gating of TRPM5. The protein is Taste receptor type 2 member 8 (TAS2R8) of Pongo pygmaeus (Bornean orangutan).